The primary structure comprises 249 residues: ATP synthase subunit a, chloroplastic (249 aa).

5 consecutive transmembrane segments (helical) span residues 40 to 60, 97 to 117, 136 to 156, 201 to 221, and 222 to 242; these read QVLITSWVVIAILLGSAVLAV, VPFIGTLFLFIFVSNWSGALL, INTTVALALLTSAAYFYAGLS, LVVVVLVSLVPLVVPIPVMFL, and GLFTSGIQALIFATLAAAYIG.

The protein belongs to the ATPase A chain family. F-type ATPases have 2 components, CF(1) - the catalytic core - and CF(0) - the membrane proton channel. CF(1) has five subunits: alpha(3), beta(3), gamma(1), delta(1), epsilon(1). CF(0) has four main subunits: a, b, b' and c.

The protein localises to the plastid. It is found in the chloroplast thylakoid membrane. Key component of the proton channel; it plays a direct role in the translocation of protons across the membrane. The chain is ATP synthase subunit a, chloroplastic from Arabis hirsuta (Hairy rock-cress).